The following is a 552-amino-acid chain: Rqc2 homolog RqcH (552 aa).

Coiled-coil stretches lie at residues 271 to 317 and 357 to 398; these read RDRV…QKGE and NAQR…MLGQ.

Belongs to the NEMF family. Associates with stalled 50S ribosomal subunits, binds to RqcH. Recombinant protein interacts with the N-terminal 30 kDa of human fibronectin (FN1).

Key component of the ribosome quality control system (RQC), a ribosome-associated complex that mediates the extraction of incompletely synthesized nascent chains from stalled ribosomes and their subsequent degradation. RqcH recruits Ala-charged tRNA, and with RqcP directs the elongation of stalled nascent chains on 50S ribosomal subunits, leading to non-templated C-terminal alanine extensions (Ala tail). The Ala tail promotes nascent chain degradation. May add between 1 and at least 8 Ala residues. Binds to stalled 50S ribosomal subunits. This Streptococcus suis (strain 05ZYH33) protein is Rqc2 homolog RqcH.